Reading from the N-terminus, the 392-residue chain is MMPVSGWRAVSSAPASSSAGRTANRIDFARSPRPTVGVEWEFALVDAETRDLSNEATAVIAEIGENPRVHKELLRNTVEVVSGVCGSAGEAIEDLRTTLGPARRIVHARGMELFCEGTHPFAQWSTQKLTDAPRYAELIKRTQWWGRQMLIWGVHVHVGVSSANKVMPIISALLNYYPHLLALSASSPWWGGEDTGYASNRAMMFQQLPTAGLPFQFQTWSEFEGFVYDQKKTGIIDHINEIRWDIRPSPHLGTIELRICDGVSNLRELGALVALMHCLVVDLDRRLDAGETLPTMPPWHVQENKWRAARYGLDAVIILDAESNERLVTDDLDDVLTRLEPVARSLSCADELAAVAEIPRVGASYQRQRRVAEEHDGDLRAVVDALIAELDI.

Positions 1–21 (MMPVSGWRAVSSAPASSSAGR) are disordered. A compositionally biased stretch (low complexity) spans 9–19 (AVSSAPASSSA).

This sequence belongs to the glutamate--cysteine ligase type 2 family. YbdK subfamily.

The enzyme catalyses L-cysteine + L-glutamate + ATP = gamma-L-glutamyl-L-cysteine + ADP + phosphate + H(+). Functionally, ATP-dependent carboxylate-amine ligase which exhibits weak glutamate--cysteine ligase activity. The protein is Putative glutamate--cysteine ligase 2 of Mycobacterium ulcerans (strain Agy99).